The chain runs to 114 residues: FK506-binding protein 1 (114 aa).

The PPIase FKBP-type domain maps to 26–114 (GDLVTIHYTG…IFDVELLKVN (89 aa)).

This sequence belongs to the FKBP-type PPIase family. FKBP1 subfamily.

It is found in the cytoplasm. It catalyses the reaction [protein]-peptidylproline (omega=180) = [protein]-peptidylproline (omega=0). With respect to regulation, inhibited by both FK506 and rapamycin. In terms of biological role, PPIases accelerate the folding of proteins. It catalyzes the cis-trans isomerization of proline imidic peptide bonds in oligopeptides. The protein is FK506-binding protein 1 (FPR1) of Candida glabrata (strain ATCC 2001 / BCRC 20586 / JCM 3761 / NBRC 0622 / NRRL Y-65 / CBS 138) (Yeast).